We begin with the raw amino-acid sequence, 700 residues long: Acyl-coenzyme A oxidase 2 (700 aa).

It belongs to the acyl-CoA oxidase family. In terms of assembly, heteropentamer composed of five different subunits. It depends on FAD as a cofactor.

The protein resides in the peroxisome. It carries out the reaction a 2,3-saturated acyl-CoA + O2 = a (2E)-enoyl-CoA + H2O2. The protein operates within lipid metabolism; peroxisomal fatty acid beta-oxidation. In terms of biological role, oxidizes strain chain acyl-CoAs with a chain length of 10 to 14 carbons. Also active toward the 2S isomers of acyl-CoA-esters containing a 2-methyl group. The chain is Acyl-coenzyme A oxidase 2 (POX2) from Yarrowia lipolytica (strain CLIB 122 / E 150) (Yeast).